Reading from the N-terminus, the 147-residue chain is Large ribosomal subunit protein uL13 (147 aa).

This sequence belongs to the universal ribosomal protein uL13 family. In terms of assembly, part of the 50S ribosomal subunit.

Functionally, this protein is one of the early assembly proteins of the 50S ribosomal subunit, although it is not seen to bind rRNA by itself. It is important during the early stages of 50S assembly. The chain is Large ribosomal subunit protein uL13 from Corynebacterium glutamicum (strain R).